Here is a 373-residue protein sequence, read N- to C-terminus: MVDIDYYELLEVDRNASFEEIKKAYRKLALKYHPDRNPDNPEAEEKFKLINEAYQVLSDEEKRALYDQYGKAGLENQGFSGFNQKSFDDIMDFFESVFGETFGGGFGSRRRSDEKYPLDLSIEMEISFQEALFGTQKEVHYSFKVPCSACKGTGAKDGKLTACPECHGRGQIYYRQGFMTFSQTCPRCHGQGEVAQEHCEECSGKGYRIEKEKITIDIPEGIDSGNRIRAQSRGNVSASGMRGDLYITVFVQEDDHFVRYNDDIYMEVPIFFTQAALGETITIPTPRGERELQLNVGTKDKEQFVFKGEGFKNVHTGKKGNLIAQVKIIYPTSLNDEQKELLHKLQESFGVESKPHEEKFSSIFEKVKNWFTK.

Positions 5-70 constitute a J domain; sequence DYYELLEVDR…EKRALYDQYG (66 aa). The CR-type zinc finger occupies 134–211; sequence GTQKEVHYSF…CSGKGYRIEK (78 aa). Positions 147, 150, 163, 166, 185, 188, 199, and 202 each coordinate Zn(2+). 4 CXXCXGXG motif repeats span residues 147-154, 163-170, 185-192, and 199-206; these read CSACKGTG, CPECHGRG, CPRCHGQG, and CEECSGKG.

It belongs to the DnaJ family. In terms of assembly, homodimer. The cofactor is Zn(2+).

The protein resides in the cytoplasm. Functionally, participates actively in the response to hyperosmotic and heat shock by preventing the aggregation of stress-denatured proteins and by disaggregating proteins, also in an autonomous, DnaK-independent fashion. Unfolded proteins bind initially to DnaJ; upon interaction with the DnaJ-bound protein, DnaK hydrolyzes its bound ATP, resulting in the formation of a stable complex. GrpE releases ADP from DnaK; ATP binding to DnaK triggers the release of the substrate protein, thus completing the reaction cycle. Several rounds of ATP-dependent interactions between DnaJ, DnaK and GrpE are required for fully efficient folding. Also involved, together with DnaK and GrpE, in the DNA replication of plasmids through activation of initiation proteins. The protein is Chaperone protein DnaJ of Nitratiruptor sp. (strain SB155-2).